The primary structure comprises 81 residues: Styelin-D (81 aa).

The signal sequence occupies residues 1-22 (MQMKATILIVLVALFMIQQSEA). W24 is subject to 6'-bromotryptophan. R26 bears the 3,4-dihydroxyarginine mark. A 4,5-dihydroxylysine mark is found at K27, K30, and K34. Residues Y36 and Y37 each carry the 3',4'-dihydroxyphenylalanine modification. The residue at position 38 (K38) is a 4,5-dihydroxylysine. Position 40 is a 5-hydroxylysine (K40). A 3',4'-dihydroxyphenylalanine mark is found at Y41 and Y42. K44 is modified (5-hydroxylysine). At L54 the chain carries Leucine amide. A propeptide spans 56-81 (DMTDEEFQDFMKEVEQAREEELQSRQ) (removed in mature form).

Contains L-DOPA (3',4'-dihydroxyphenylalanine). As to expression, hemocytes and pharyngeal tissues.

The protein resides in the secreted. Its function is as follows. Bactericidal against several Gram-positive and Gram-negative bacteria. Plays a significant role in the innate immune mechanisms of S.clava. This chain is Styelin-D, found in Styela clava (Sea squirt).